A 774-amino-acid chain; its full sequence is Vezatin (774 aa).

The next 2 helical transmembrane spans lie at 138–158 (IATP…AVAA) and 163–183 (SISS…FTVL). A coiled-coil region spans residues 430–457 (VRSLQLHLKALLNEVIVLEDELDKLSSC). Acidic residues predominate over residues 746 to 757 (FGDEWDDDDDNE). Residues 746-774 (FGDEWDDDDDNEDHDHDKERNNDSSQLEG) are disordered. Residues 758 to 767 (DHDHDKERNN) are compositionally biased toward basic and acidic residues.

Belongs to the vezatin family. Interacts with myosin VIIa and the cadherin-catenins complex.

The protein localises to the cell membrane. It is found in the cell junction. Its subcellular location is the adherens junction. The protein resides in the nucleus. Plays a pivotal role in the establishment of adherens junctions and their maintenance in adult life. This chain is Vezatin (vezt), found in Xenopus laevis (African clawed frog).